A 433-amino-acid polypeptide reads, in one-letter code: Enolase (433 aa).

Glutamine 164 lines the (2R)-2-phosphoglycerate pocket. The Proton donor role is filled by glutamate 206. Aspartate 243, glutamate 289, and aspartate 316 together coordinate Mg(2+). (2R)-2-phosphoglycerate-binding residues include lysine 341, arginine 370, serine 371, and lysine 392. Lysine 341 acts as the Proton acceptor in catalysis.

The protein belongs to the enolase family. It depends on Mg(2+) as a cofactor.

It is found in the cytoplasm. The protein resides in the secreted. It localises to the cell surface. The catalysed reaction is (2R)-2-phosphoglycerate = phosphoenolpyruvate + H2O. The protein operates within carbohydrate degradation; glycolysis; pyruvate from D-glyceraldehyde 3-phosphate: step 4/5. Catalyzes the reversible conversion of 2-phosphoglycerate (2-PG) into phosphoenolpyruvate (PEP). It is essential for the degradation of carbohydrates via glycolysis. This is Enolase from Borreliella afzelii (strain PKo) (Borrelia afzelii).